The sequence spans 607 residues: UPF0329 protein ECU06_1610 (607 aa).

Disordered regions lie at residues Val312–Gly410 and Thr531–Val570. Residues His313–Gly347 show a composition bias toward basic and acidic residues. A compositionally biased stretch (basic residues) spans Lys353 to Gly364. Residues Lys365–Asp374 show a composition bias toward basic and acidic residues. The span at Arg375–Ala393 shows a compositional bias: acidic residues. Over residues Thr531 to Ser543 the composition is skewed to polar residues. A compositionally biased stretch (acidic residues) spans Asp549–Ser558.

It belongs to the UPF0329 family.

The polypeptide is UPF0329 protein ECU06_1610 (Encephalitozoon cuniculi (strain GB-M1) (Microsporidian parasite)).